The following is a 379-amino-acid chain: MQEALALFFGSESLLVGTIIPFLFVLTVVVFVHEMGHYLVARWCGIGAQAFSIGFGPELLGFTDRHGTRWKLSAIPLGGYVKFIGDESETSSPVGVNESALSEEDRKRAFHTQPVWKRAATVFAGPAFNIILTIAIFSVFFALYGRQIADPLIAGVQPGSPAAEAGFEPGDRFVSVEGEKITTFADVQRIVSGRAGDKLNFTVERDGKMVDLQAVPKIVERTDPLGNKVKLGAIGVETTEAVGNFRRIEYGPLESVGQAVIETGHIIGRTGEFFKRFAVGREDKCQLGGPVKIATMASKAASQGFDWLIQLMAMLSIGIGLLNLFPLPPLDGGHLVFYAVEAIKGSPVSGAAQEIFYRIGFLLVMGFMGFVLFNDLFAC.

His-33 contacts Zn(2+). The active site involves Glu-34. His-37 contributes to the Zn(2+) binding site. The next 4 helical transmembrane spans lie at 39–61 (LVARWCGIGAQAFSIGFGPELLG), 122–144 (VFAGPAFNIILTIAIFSVFFALY), 305–327 (FDWLIQLMAMLSIGIGLLNLFPL), and 355–377 (IFYRIGFLLVMGFMGFVLFNDLF). In terms of domain architecture, PDZ spans 133 to 208 (TIAIFSVFFA…LNFTVERDGK (76 aa)).

Belongs to the peptidase M50B family. The cofactor is Zn(2+).

It localises to the cell inner membrane. The sequence is that of Putative zinc metalloprotease BR1156/BS1330_I1152 from Brucella suis biovar 1 (strain 1330).